Here is a 610-residue protein sequence, read N- to C-terminus: Elongation factor 4 (610 aa).

Residues 13–195 (SHIRNFSIVA…AIVHKLPAPK (183 aa)) enclose the tr-type G domain. GTP is bound by residues 25–30 (DHGKST) and 142–145 (NKID).

Belongs to the TRAFAC class translation factor GTPase superfamily. Classic translation factor GTPase family. LepA subfamily.

It localises to the cell inner membrane. It carries out the reaction GTP + H2O = GDP + phosphate + H(+). Functionally, required for accurate and efficient protein synthesis under certain stress conditions. May act as a fidelity factor of the translation reaction, by catalyzing a one-codon backward translocation of tRNAs on improperly translocated ribosomes. Back-translocation proceeds from a post-translocation (POST) complex to a pre-translocation (PRE) complex, thus giving elongation factor G a second chance to translocate the tRNAs correctly. Binds to ribosomes in a GTP-dependent manner. This chain is Elongation factor 4, found in Rhizobium johnstonii (strain DSM 114642 / LMG 32736 / 3841) (Rhizobium leguminosarum bv. viciae).